The chain runs to 357 residues: Phosphoribosylformylglycinamidine cyclo-ligase (357 aa).

Belongs to the AIR synthase family.

The protein localises to the cytoplasm. It catalyses the reaction 2-formamido-N(1)-(5-O-phospho-beta-D-ribosyl)acetamidine + ATP = 5-amino-1-(5-phospho-beta-D-ribosyl)imidazole + ADP + phosphate + H(+). It participates in purine metabolism; IMP biosynthesis via de novo pathway; 5-amino-1-(5-phospho-D-ribosyl)imidazole from N(2)-formyl-N(1)-(5-phospho-D-ribosyl)glycinamide: step 2/2. The protein is Phosphoribosylformylglycinamidine cyclo-ligase of Rhizobium johnstonii (strain DSM 114642 / LMG 32736 / 3841) (Rhizobium leguminosarum bv. viciae).